Here is a 162-residue protein sequence, read N- to C-terminus: Shikimate kinase (162 aa).

An ATP-binding site is contributed by G10 to T15. Residue S14 coordinates Mg(2+). Substrate contacts are provided by D28, R52, and G73. R113 lines the ATP pocket. A substrate-binding site is contributed by R129.

Belongs to the shikimate kinase family. Monomer. Requires Mg(2+) as cofactor.

Its subcellular location is the cytoplasm. The enzyme catalyses shikimate + ATP = 3-phosphoshikimate + ADP + H(+). Its pathway is metabolic intermediate biosynthesis; chorismate biosynthesis; chorismate from D-erythrose 4-phosphate and phosphoenolpyruvate: step 5/7. Functionally, catalyzes the specific phosphorylation of the 3-hydroxyl group of shikimic acid using ATP as a cosubstrate. The polypeptide is Shikimate kinase (Lactococcus lactis subsp. cremoris (strain SK11)).